The chain runs to 535 residues: MTIDHEVKRRRTFAIISHPDAGKTTLTEKLLLFAGAIHIAGSVKARKASRHATSDWMEIEKQRGISVASSVMQMEYRDCVINLLDTPGHQDFSEDTYRVLTAVDAALMVIDAANGVESQTLRLLQVCRARNTPIITFVNKLDREVREPLDLIDEIERTLGMDVIPFTWPVGSGKRFHGVYDLRHKLMRVFRAGMDRVEQEETAIITNLEDPAISERFGANLEQARQEIELITGAAPEFDQTAFLAGQQTPVFFGSAINNFGVQEVLDTLVELAPPPGSRKAIQREIQPAEKKFSGVVFKIQANMNPAHRDRIAFVRICSGEFRRGMNLKVVRSGKDVRTSTVVSFLSQRRELLETAYAGDIIGIPNHGTLQLADTLTEGDHLQFTGLPFFAPEIFQTVEIADPLRSKQLKLGLAQLGEEGAIQVFRPHIGSMLLLGAVGVLQFEVVTHRLKHEYGVEARIAPAKYQLARWVTAETPQELQRFIDANAHRIAYDAVNAPTFLASFSAEISVAEENWPGIRFHKMREHAGLMFQTAG.

Residues 8 to 277 (KRRRTFAIIS…TLVELAPPPG (270 aa)) form the tr-type G domain. GTP contacts are provided by residues 17–24 (SHPDAGKT), 85–89 (DTPGH), and 139–142 (NKLD).

The protein belongs to the TRAFAC class translation factor GTPase superfamily. Classic translation factor GTPase family. PrfC subfamily.

Its subcellular location is the cytoplasm. Its function is as follows. Increases the formation of ribosomal termination complexes and stimulates activities of RF-1 and RF-2. It binds guanine nucleotides and has strong preference for UGA stop codons. It may interact directly with the ribosome. The stimulation of RF-1 and RF-2 is significantly reduced by GTP and GDP, but not by GMP. This Nitrosomonas europaea (strain ATCC 19718 / CIP 103999 / KCTC 2705 / NBRC 14298) protein is Peptide chain release factor 3.